The chain runs to 370 residues: GTPase Obg (370 aa).

Residues 1 to 159 (MKFIDEARIE…RMVRLELKVL (159 aa)) form the Obg domain. The interval 127 to 147 (NLHFKSSTNRAPRQKTDGKPG) is disordered. Residues 160 to 334 (ADVGLLGMPN…LCYAVYDYLA (175 aa)) enclose the OBG-type G domain. GTP is bound by residues 166–173 (GMPNAGKS), 191–195 (FTTLA), 213–216 (DIPG), 284–287 (NKLD), and 315–317 (SAL). The Mg(2+) site is built by Ser-173 and Thr-193.

Belongs to the TRAFAC class OBG-HflX-like GTPase superfamily. OBG GTPase family. In terms of assembly, monomer. It depends on Mg(2+) as a cofactor.

It is found in the cytoplasm. In terms of biological role, an essential GTPase which binds GTP, GDP and possibly (p)ppGpp with moderate affinity, with high nucleotide exchange rates and a fairly low GTP hydrolysis rate. Plays a role in control of the cell cycle, stress response, ribosome biogenesis and in those bacteria that undergo differentiation, in morphogenesis control. This is GTPase Obg from Paraburkholderia phymatum (strain DSM 17167 / CIP 108236 / LMG 21445 / STM815) (Burkholderia phymatum).